Here is a 305-residue protein sequence, read N- to C-terminus: ATP-dependent Clp protease proteolytic subunit-related protein 4, chloroplastic (305 aa).

The transit peptide at 1 to 68 directs the protein to the chloroplast; it reads MEVAAATATS…SSDLCGAKLR (68 aa).

The protein belongs to the peptidase S14 family. In terms of assembly, component of the chloroplastic Clp protease core complex which consist of at least 16 proteins: CLPP4 (3 copies), CLPP5 (3 copies), CLPR4 (2 copies), ClpP1 (1 copy), CLPP6 (1 copy), CLPR2 (1 copy), CLPT1 (1 copy), CLPT2 (1 copy) and 3 copies of CLPP3 and/or CLPR1 and/or CLPR3. The core complex is organized in two heptameric rings, one containing CLPP3,4,5,6 in a 1:2:3:1 ratio and the other CLPP1 and CLPR1,2,3,4 in a 3:1:1:1:1 ratio.

The protein resides in the plastid. Its subcellular location is the chloroplast. Involved in plastid protein homeostasis. This is ATP-dependent Clp protease proteolytic subunit-related protein 4, chloroplastic from Arabidopsis thaliana (Mouse-ear cress).